The following is a 339-amino-acid chain: Glycerol-3-phosphate dehydrogenase [NAD(P)+] (339 aa).

NADPH is bound by residues Ser-15, Tyr-16, His-36, and Lys-110. 3 residues coordinate sn-glycerol 3-phosphate: Lys-110, Gly-139, and Thr-141. Residue Ala-143 participates in NADPH binding. Sn-glycerol 3-phosphate is bound by residues Lys-195, Asp-248, Ser-258, Arg-259, and Asn-260. Lys-195 acts as the Proton acceptor in catalysis. Arg-259 provides a ligand contact to NADPH. 2 residues coordinate NADPH: Val-283 and Glu-285.

This sequence belongs to the NAD-dependent glycerol-3-phosphate dehydrogenase family.

It localises to the cytoplasm. The catalysed reaction is sn-glycerol 3-phosphate + NAD(+) = dihydroxyacetone phosphate + NADH + H(+). It carries out the reaction sn-glycerol 3-phosphate + NADP(+) = dihydroxyacetone phosphate + NADPH + H(+). Its pathway is membrane lipid metabolism; glycerophospholipid metabolism. Functionally, catalyzes the reduction of the glycolytic intermediate dihydroxyacetone phosphate (DHAP) to sn-glycerol 3-phosphate (G3P), the key precursor for phospholipid synthesis. The protein is Glycerol-3-phosphate dehydrogenase [NAD(P)+] of Shigella boydii serotype 18 (strain CDC 3083-94 / BS512).